A 503-amino-acid polypeptide reads, in one-letter code: Glycoprotein 3-alpha-L-fucosyltransferase A (503 aa).

At 1–10 the chain is on the cytoplasmic side; it reads MRRPKISLKK. Residues 11-28 form a helical; Signal-anchor for type II membrane protein membrane-spanning segment; that stretch reads YFYLTLICALLLIFGFSL. Over 29–503 the chain is Lumenal; sequence KEREIWKTLS…KDVISDSSDD (475 aa). The interval 44-71 is disordered; it reads ITTQQQQHQHLHQLQSMDEEHPMATSST. The span at 47–58 shows a compositional bias: low complexity; that stretch reads QQQQHQHLHQLQ. Asn-262, Asn-295, and Asn-299 each carry an N-linked (GlcNAc...) asparagine glycan.

Belongs to the glycosyltransferase 10 family. Requires Mn(2+) as cofactor.

It is found in the golgi apparatus. The protein localises to the golgi stack membrane. It catalyses the reaction N(4)-{beta-D-GlcNAc-(1-&gt;2)-alpha-D-Man-(1-&gt;3)-[beta-D-GlcNAc-(1-&gt;2)-alpha-D-Man-(1-&gt;6)]-beta-D-Man-(1-&gt;4)-beta-D-GlcNAc-(1-&gt;4)-beta-D-GlcNAc}-L-asparaginyl-[protein] + GDP-beta-L-fucose = N(4)-{beta-D-GlcNAc-(1-&gt;2)-alpha-D-Man-(1-&gt;3)-[beta-D-GlcNAc-(1-&gt;2)-alpha-D-Man-(1-&gt;6)]-beta-D-Man-(1-&gt;4)-beta-D-GlcNAc-(1-&gt;4)-[alpha-L-Fuc(1-&gt;3)]-beta-D-GlcNAc}-L-asparaginyl-[protein] + GDP + H(+). It functions in the pathway protein modification; protein glycosylation. Functionally, catalyzes alpha-1,3 glycosidic linkages of N-glycans. Plays a role in neuronal development by promoting ventral nerve cord formation, possibly by promoting interactions between migrating cells and the extracellular matrix or by promoting neural activity. In Drosophila melanogaster (Fruit fly), this protein is Glycoprotein 3-alpha-L-fucosyltransferase A (FucTA).